We begin with the raw amino-acid sequence, 636 residues long: Putative cysteine-rich receptor-like protein kinase 33 (636 aa).

Positions 1–25 are cleaved as a signal peptide; sequence MRKTKKISFLIFWVVLISIIGAISS. Gnk2-homologous domains follow at residues 26–128 and 138–245; these read QQCN…NSSF and YMEH…LYPF. Residues 26–266 are Extracellular-facing; sequence QQCNETGYFE…PGSKRNISVG (241 aa). N-linked (GlcNAc...) asparagine glycosylation is found at Asn-29, Asn-63, Asn-105, Asn-125, Asn-149, Asn-173, Asn-185, Asn-188, Asn-250, and Asn-262. The chain crosses the membrane as a helical span at residues 267–287; the sequence is FFVAIVVATGVVISVLSTLVV. Over 288 to 636 the chain is Cytoplasmic; sequence VLVCRKRKTD…DSLIDDLVPR (349 aa). The Protein kinase domain maps to 321–600; it reads FSKCNMLGQG…MMLTSNSITL (280 aa). ATP is bound by residues 327–335 and Lys-349; that span reads LGQGGFGEV. Tyr-394 bears the Phosphotyrosine mark. The active-site Proton acceptor is the Asp-446. Ser-450 carries the phosphoserine modification. Phosphothreonine is present on Thr-486. The residue at position 494 (Tyr-494) is a Phosphotyrosine.

Belongs to the protein kinase superfamily. Ser/Thr protein kinase family. CRK subfamily.

Its subcellular location is the membrane. It catalyses the reaction L-seryl-[protein] + ATP = O-phospho-L-seryl-[protein] + ADP + H(+). It carries out the reaction L-threonyl-[protein] + ATP = O-phospho-L-threonyl-[protein] + ADP + H(+). The sequence is that of Putative cysteine-rich receptor-like protein kinase 33 (CRK33) from Arabidopsis thaliana (Mouse-ear cress).